Reading from the N-terminus, the 317-residue chain is Melanocyte-stimulating hormone receptor (317 aa).

Residues 1–37 lie on the Extracellular side of the membrane; that stretch reads MPVQGSQRRLLGSLNSTPTATPHLGLAANQTGARCLE. Asn29 is a glycosylation site (N-linked (GlcNAc...) asparagine). Residues 38–63 traverse the membrane as a helical segment; the sequence is VSIPDGLFLSLGLVSLVENVLVVTAI. Residues 64 to 72 lie on the Cytoplasmic side of the membrane; it reads AKNRNLHSP. A helical transmembrane segment spans residues 73–93; that stretch reads MYCFICCLALSDLLVSGSNML. Topologically, residues 94 to 118 are extracellular; sequence ETAVILLLEAGALAARAAVVQQLDN. Residues 119–140 form a helical membrane-spanning segment; the sequence is VIDVITCSSMLSSLCFLGAIAV. Topologically, residues 141–163 are cytoplasmic; it reads DRYISIFYALRYHSIVTLPRARR. A helical transmembrane segment spans residues 164-183; that stretch reads AVAAIWVASVLFSMLFIAYY. Over 184–191 the chain is Extracellular; the sequence is DHAAVLLC. The chain crosses the membrane as a helical span at residues 192 to 211; that stretch reads LVVFFLAMLVLMAVLYVHML. Over 212-240 the chain is Cytoplasmic; sequence ARACQHAQGIARLHKRQRPAHQSFGLKGA. Residues 241–266 form a helical membrane-spanning segment; that stretch reads ATLTILLGIFFLCWGPFFLHLTLIVL. The Extracellular portion of the chain corresponds to 267-279; that stretch reads CPQHPTCSCIFKN. Residues 280-300 form a helical membrane-spanning segment; that stretch reads FNLFLTLIICNAIIDPLIYAF. The Cytoplasmic portion of the chain corresponds to 301–317; it reads RSQELRRTLKEVLLCSW. Cys315 carries S-palmitoyl cysteine lipidation.

Belongs to the G-protein coupled receptor 1 family. In terms of assembly, interacts with MGRN1, but does not undergo MGRN1-mediated ubiquitination; this interaction competes with GNAS-binding and thus inhibits agonist-induced cAMP production. Interacts with OPN3; the interaction results in a decrease in MC1R-mediated cAMP signaling and ultimately a decrease in melanin production in melanocytes.

Its subcellular location is the cell membrane. Functionally, receptor for MSH (alpha, beta and gamma) and ACTH. The activity of this receptor is mediated by G proteins which activate adenylate cyclase. Mediates melanogenesis, the production of eumelanin (black/brown) and phaeomelanin (red/yellow), via regulation of cAMP signaling in melanocytes. This is Melanocyte-stimulating hormone receptor (MC1R) from Erythrocebus patas (Red guenon).